The sequence spans 430 residues: Adenylosuccinate synthetase (430 aa).

Residues 12–18 (GDEGKGK) and 40–42 (GHT) contribute to the GTP site. Asp13 functions as the Proton acceptor in the catalytic mechanism. 2 residues coordinate Mg(2+): Asp13 and Gly40. IMP-binding positions include 13–16 (DEGK), 38–41 (NAGH), Thr128, Arg142, Gln223, Thr238, and Arg302. His41 (proton donor) is an active-site residue. Residue 298–304 (TTTGRPR) coordinates substrate. Residues Arg304, 330-332 (SID), and 412-414 (SVG) each bind GTP.

It belongs to the adenylosuccinate synthetase family. In terms of assembly, homodimer. The cofactor is Mg(2+).

It is found in the cytoplasm. It carries out the reaction IMP + L-aspartate + GTP = N(6)-(1,2-dicarboxyethyl)-AMP + GDP + phosphate + 2 H(+). It functions in the pathway purine metabolism; AMP biosynthesis via de novo pathway; AMP from IMP: step 1/2. Functionally, plays an important role in the de novo pathway of purine nucleotide biosynthesis. Catalyzes the first committed step in the biosynthesis of AMP from IMP. The sequence is that of Adenylosuccinate synthetase from Streptococcus pyogenes serotype M4 (strain MGAS10750).